Here is a 414-residue protein sequence, read N- to C-terminus: xyloglucan O-acetyltransferase 2 (414 aa).

Over 1-26 the chain is Cytoplasmic; the sequence is MKSSSSIFRETSEKKSERWMMMNIGR. The helical; Signal-anchor for type II membrane protein transmembrane segment at 27-47 threads the bilayer; the sequence is FSPFFLSSFCITLFFTGFFVY. Residues 48–414 are Lumenal-facing; it reads QNPFKSIADQ…FLMAIIRQLR (367 aa). Disulfide bonds link Cys70-Cys120, Cys91-Cys156, Cys100-Cys394, and Cys317-Cys390. Asn88 carries an N-linked (GlcNAc...) asparagine glycan. A GDS motif motif is present at residues 143–145; that stretch reads GDS. Ser145 (nucleophile) is an active-site residue. Asn205, Asn263, and Asn308 each carry an N-linked (GlcNAc...) asparagine glycan. Asp389 acts as the Proton donor in catalysis. Positions 389-392 match the DXXH motif motif; the sequence is DCVH. His392 (proton acceptor) is an active-site residue.

Belongs to the PC-esterase family. TBL subfamily.

It localises to the membrane. Functionally, xyloglucan acetyltransferase that catalyzes the acetylation of fucosylated Gal residues on xyloglucan side chains. Predominantly catalyze 6-O-monoacetylation of Gal residues in the Fuc-Gal-Xyl trisaccharide side chains of xyloglucan oligomers. Involved in xyloglucan specific O-acetylation in seeds. This Arabidopsis thaliana (Mouse-ear cress) protein is xyloglucan O-acetyltransferase 2.